The sequence spans 189 residues: Probable nicotinate-nucleotide adenylyltransferase (189 aa).

This sequence belongs to the NadD family.

The catalysed reaction is nicotinate beta-D-ribonucleotide + ATP + H(+) = deamido-NAD(+) + diphosphate. It functions in the pathway cofactor biosynthesis; NAD(+) biosynthesis; deamido-NAD(+) from nicotinate D-ribonucleotide: step 1/1. Its function is as follows. Catalyzes the reversible adenylation of nicotinate mononucleotide (NaMN) to nicotinic acid adenine dinucleotide (NaAD). This is Probable nicotinate-nucleotide adenylyltransferase from Exiguobacterium sibiricum (strain DSM 17290 / CCUG 55495 / CIP 109462 / JCM 13490 / 255-15).